Consider the following 642-residue polypeptide: Threonine--tRNA ligase (642 aa).

In terms of domain architecture, TGS spans 1–61; the sequence is MPVITLPDGS…EHDAQIAIIT (61 aa). The catalytic stretch occupies residues 243 to 534; the sequence is DHRKIGKQLD…LTEEYAGFYP (292 aa). Zn(2+) is bound by residues C334, H385, and H511.

This sequence belongs to the class-II aminoacyl-tRNA synthetase family. Homodimer. Zn(2+) serves as cofactor.

Its subcellular location is the cytoplasm. It carries out the reaction tRNA(Thr) + L-threonine + ATP = L-threonyl-tRNA(Thr) + AMP + diphosphate + H(+). Functionally, catalyzes the attachment of threonine to tRNA(Thr) in a two-step reaction: L-threonine is first activated by ATP to form Thr-AMP and then transferred to the acceptor end of tRNA(Thr). Also edits incorrectly charged L-seryl-tRNA(Thr). The sequence is that of Threonine--tRNA ligase from Sodalis glossinidius (strain morsitans).